The sequence spans 320 residues: Malate dehydrogenase (320 aa).

Residues 10–15 (GSGMIG) and aspartate 34 contribute to the NAD(+) site. Positions 83 and 89 each coordinate substrate. NAD(+) contacts are provided by residues asparagine 96 and 119–121 (ITN). Substrate-binding residues include asparagine 121 and arginine 152. Histidine 176 serves as the catalytic Proton acceptor.

This sequence belongs to the LDH/MDH superfamily. MDH type 3 family.

The enzyme catalyses (S)-malate + NAD(+) = oxaloacetate + NADH + H(+). Its function is as follows. Catalyzes the reversible oxidation of malate to oxaloacetate. The protein is Malate dehydrogenase of Brucella canis (strain ATCC 23365 / NCTC 10854 / RM-666).